Here is a 249-residue protein sequence, read N- to C-terminus: General transcription factor IIF subunit 2 (249 aa).

Ala-2 is modified (N-acetylalanine). N6-acetyllysine is present on residues Lys-22, Lys-33, and Lys-137. Ser-142 is modified (phosphoserine). DNA contacts are provided by Gly-227 and His-229. At Ser-248 the chain carries Phosphoserine.

The protein belongs to the TFIIF beta subunit family. Heterodimer of an alpha and a beta subunit. Interacts with HTATSF1 and GPBP1. Interacts with URI1. Interacts with GTF2B (via N-terminus); this interaction is inhibited in presence of GTF2F1. Part of TBP-based Pol II pre-initiation complex (PIC), in which Pol II core assembles with general transcription factors and other specific initiation factors including GTF2E1, GTF2E2, GTF2F1, GTF2F2, TCEA1, ERCC2, ERCC3, GTF2H2, GTF2H3, GTF2H4, GTF2H5, GTF2A1, GTF2A2, GTF2B and TBP; this large multi-subunit PIC complex mediates DNA unwinding and targets Pol II core to the transcription start site where the first phosphodiester bond forms.

The protein localises to the nucleus. TFIIF is a general transcription initiation factor that binds to RNA polymerase II and helps to recruit it to the initiation complex in collaboration with TFIIB. In Homo sapiens (Human), this protein is General transcription factor IIF subunit 2 (GTF2F2).